The chain runs to 113 residues: MAAIPSSGSLVATHDYYRRRLGSTSSSSSCGSVDYSGEVIPHHPGLPKADPGHWWASFFFGKSTHPVMTTVSESPENSGSFRITNGLVPCGLTQESVQKQKVSDSKSNSSPSA.

The protein belongs to the PPDPF family.

Its function is as follows. Probable regulator of exocrine pancreas development. This is Pancreatic progenitor cell differentiation and proliferation factor A (ppdpf-a) from Xenopus laevis (African clawed frog).